The primary structure comprises 473 residues: TOX high mobility group box family member 2 (473 aa).

4 disordered regions span residues 1–42 (MSDG…SLLH), 139–211 (GLRS…VSAY), 277–302 (SKSPPDQGEAKNAQANPPAKMLPPKQ), and 340–473 (LLPG…PSAR). Over residues 8–20 (LLSTSQTYNSQGE) the composition is skewed to polar residues. A required for transcriptional activation region spans residues 25-63 (YEIPPITPPNLPEPSLLHLGDHEAGYHSLCHGLAPNGLL). The segment covering 153-164 (GSKSATPSPSSS) has biased composition (low complexity). A compositionally biased stretch (basic and acidic residues) spans 171–188 (DAHFKISGEKRPSTDPGK). Positions 172–201 (AHFKISGEKRPSTDPGKKAKNPKKKKKKDP) match the Nuclear localization signal motif. Residues 189-199 (KAKNPKKKKKK) show a composition bias toward basic residues. A DNA-binding region (HMG box) is located at residues 204 to 272 (PQKPVSAYAL…EYLKALAAYR (69 aa)). 2 stretches are compositionally biased toward low complexity: residues 373 to 382 (LLSPPLSMSP) and 415 to 440 (SDFPSGSGSRSPGPSNPSSSGDWDGS). The span at 463 to 473 (SPKNLQEPSAR) shows a compositional bias: polar residues.

Highly expressed in ovary, where it is restricted to undifferentiated granulosa cells. Expressed in hypothalamus, pituitary gland, testis and uterus.

It localises to the nucleus. Its function is as follows. Putative transcriptional activator involved in the hypothalamo-pituitary-gonadal system. The protein is TOX high mobility group box family member 2 (Tox2) of Rattus norvegicus (Rat).